The chain runs to 158 residues: Protein OPG060 (158 aa).

Belongs to the orthopoxvirus OPG058 family.

The polypeptide is Protein OPG060 (OPG060) (Homo sapiens (Human)).